A 147-amino-acid chain; its full sequence is Large ribosomal subunit protein uL15 (147 aa).

The protein belongs to the universal ribosomal protein uL15 family. In terms of assembly, part of the 50S ribosomal subunit.

Functionally, binds to the 23S rRNA. In Blochmanniella floridana, this protein is Large ribosomal subunit protein uL15.